We begin with the raw amino-acid sequence, 146 residues long: Large ribosomal subunit protein uL15 (146 aa).

A compositionally biased stretch (basic and acidic residues) spans 1–13; sequence MKLNELKPNEGSR. The disordered stretch occupies residues 1-54; it reads MKLNELKPNEGSRRNRKRVGRGTSSGYGKTAGRGQKGQLARTGGKTRLGFEGGQ. The span at 23-35 shows a compositional bias: gly residues; it reads TSSGYGKTAGRGQ.

It belongs to the universal ribosomal protein uL15 family. As to quaternary structure, part of the 50S ribosomal subunit.

Functionally, binds to the 23S rRNA. This chain is Large ribosomal subunit protein uL15, found in Lactobacillus gasseri (strain ATCC 33323 / DSM 20243 / BCRC 14619 / CIP 102991 / JCM 1131 / KCTC 3163 / NCIMB 11718 / NCTC 13722 / AM63).